The primary structure comprises 562 residues: Arginine--tRNA ligase (562 aa).

The 'HIGH' region motif lies at 129–139 (ANPTGPLHVGH).

Belongs to the class-I aminoacyl-tRNA synthetase family. In terms of assembly, monomer.

It is found in the cytoplasm. It catalyses the reaction tRNA(Arg) + L-arginine + ATP = L-arginyl-tRNA(Arg) + AMP + diphosphate. This is Arginine--tRNA ligase (argS) from Xylella fastidiosa (strain 9a5c).